The sequence spans 417 residues: NADH-quinone oxidoreductase subunit D (417 aa).

It belongs to the complex I 49 kDa subunit family. As to quaternary structure, NDH-1 is composed of 14 different subunits. Subunits NuoB, C, D, E, F, and G constitute the peripheral sector of the complex.

Its subcellular location is the cell inner membrane. It carries out the reaction a quinone + NADH + 5 H(+)(in) = a quinol + NAD(+) + 4 H(+)(out). In terms of biological role, NDH-1 shuttles electrons from NADH, via FMN and iron-sulfur (Fe-S) centers, to quinones in the respiratory chain. The immediate electron acceptor for the enzyme in this species is believed to be ubiquinone. Couples the redox reaction to proton translocation (for every two electrons transferred, four hydrogen ions are translocated across the cytoplasmic membrane), and thus conserves the redox energy in a proton gradient. This Polynucleobacter necessarius subsp. necessarius (strain STIR1) protein is NADH-quinone oxidoreductase subunit D.